The primary structure comprises 352 residues: Transcription factor BHLH156 (352 aa).

The disordered stretch occupies residues G59–K141. A basic motif region spans residues R130–R143. Residues R130–L179 form the bHLH domain. The interval V144 to L179 is helix-loop-helix motif. The tract at residues E194–R216 is disordered. The segment covering A206 to R216 has biased composition (low complexity).

It belongs to the bHLH protein family. Forms homodimers. Interacts with IRO2 in the nucleus. As to expression, expressed in the meristematic zone of lateral and primary roots.

Its subcellular location is the nucleus. Functionally, transcription factor involved in positive regulation of genes involved in strategy II iron acquisition, including genes for mugineic acid (MA) family phytosiderophores biosynthesis, and genes involved in S-adenosylmethionine cycle and iron transport. May play a role in the regulation of iron deficiency response by promoting the nuclear localization of IRO2. Possesses transactivation activity in yeast. This is Transcription factor BHLH156 from Oryza sativa subsp. japonica (Rice).